A 478-amino-acid chain; its full sequence is Proton-coupled amino acid transporter 2 (478 aa).

2 stretches are compositionally biased toward polar residues: residues 1–14 and 26–37; these read MSVTKSARSPQVAT and KLQSQDPSPANG. A disordered region spans residues 1 to 46; that stretch reads MSVTKSARSPQVATPLNLDLPESAKKLQSQDPSPANGSSSESSKKT. The Cytoplasmic segment spans residues 1–53; sequence MSVTKSARSPQVATPLNLDLPESAKKLQSQDPSPANGSSSESSKKTKGITGFQ. A helical transmembrane segment spans residues 54–74; sequence TLVHLVKGNMGTGILGLPLAV. Residues 75–76 lie on the Extracellular side of the membrane; sequence KN. A helical transmembrane segment spans residues 77–97; it reads AGILMGPLSLLVMGLIACHCM. Over 98 to 143 the chain is Cytoplasmic; it reads HILVRCAQRFCHRLNKPFMDYGDTVMHGLAFSPNAWLQNHAHWGRR. A helical membrane pass occupies residues 144-164; sequence VVSFFLIVTQLGFCCVYIVFL. Residues 165 to 192 are Extracellular-facing; the sequence is ADNLKQVVEAVNSTTISCHKNETVVLTP. The helical transmembrane segment at 193–213 threads the bilayer; it reads TMDSRLYMLSFLPVLGLLVFV. Over 214–217 the chain is Cytoplasmic; it reads RNLR. A helical membrane pass occupies residues 218-238; that stretch reads VLTIFSLLANISMLVSLVIIA. Residues 239–259 are Extracellular-facing; sequence QYIIQEIPDASQLPLVASWKT. A helical membrane pass occupies residues 260–280; that stretch reads YPLFFGTAIFSFESIGVVLPL. Over 281 to 292 the chain is Cytoplasmic; it reads ENKMKDARGFPT. The chain crosses the membrane as a helical span at residues 293-313; sequence ILSLGMSIITTLYIAIGALGY. Residues 314-340 are Extracellular-facing; that stretch reads LRFGDDIKASITLNLPNCWLYQSVKLL. A helical transmembrane segment spans residues 341–361; sequence YVVGILCTYALQFYVPAEIII. The Cytoplasmic portion of the chain corresponds to 362–374; sequence PLAVSQVSKRWAL. A helical transmembrane segment spans residues 375–395; it reads PVDLSIRLALVCLTCMLAILI. The Extracellular segment spans residues 396–399; that stretch reads PRLD. Residues 400–420 form a helical membrane-spanning segment; sequence LVLSLVGSVSSSALALIIPPL. At 421–441 the chain is on the cytoplasmic side; it reads LEVVTYYGEGISPLTVTKDAL. A helical membrane pass occupies residues 442 to 462; the sequence is ISILGFMGFVVGTYQALDELI. Over 463 to 478 the chain is Extracellular; it reads KSGNSPALSNSTMFIQ.

Belongs to the amino acid/polyamine transporter 2 family. In terms of tissue distribution, expressed in spinal cord, brain, testis, lung, heart, colon, spleen, kidney and muscle. Found in neuronal cell bodies in the anterior horn, in spinal cord brain stem, cerebellum, hippocampus, hypothalamus, rhinencephalon, cerebral cortex, and olfactory bulb in the brain. Also expressed in bone and fat tissues.

It localises to the cell membrane. Its subcellular location is the endoplasmic reticulum membrane. The protein resides in the recycling endosome membrane. The catalysed reaction is glycine(in) + H(+)(in) = glycine(out) + H(+)(out). It carries out the reaction L-alanine(in) + H(+)(in) = L-alanine(out) + H(+)(out). It catalyses the reaction D-alanine(in) + H(+)(in) = D-alanine(out) + H(+)(out). The enzyme catalyses L-proline(out) + H(+)(out) = L-proline(in) + H(+)(in). The catalysed reaction is D-proline(out) + H(+)(out) = D-proline(in) + H(+)(in). It carries out the reaction 4-hydroxy-L-proline(in) + H(+)(in) = 4-hydroxy-L-proline(out) + H(+)(out). It catalyses the reaction L-serine(in) + H(+)(in) = L-serine(out) + H(+)(out). The enzyme catalyses D-serine(out) + H(+)(out) = D-serine(in) + H(+)(in). The catalysed reaction is beta-alanine(in) + H(+)(in) = beta-alanine(out) + H(+)(out). It carries out the reaction 4-aminobutanoate(in) + H(+)(in) = 4-aminobutanoate(out) + H(+)(out). It catalyses the reaction sarcosine(in) + H(+)(in) = sarcosine(out) + H(+)(out). The enzyme catalyses N,N-dimethylglycine(in) + H(+)(in) = N,N-dimethylglycine(out) + H(+)(out). Electrogenic proton/amino acid symporter with a high selectivity for the small side chains amino acids glycine, alanine and proline, where both L- and D-enantiomers are transported. Extension of the backbone length, as in beta-alanine and 4-aminobutanoate or methylation of the amino group, as in sarcosine and N,N-dimethylglycine, are also tolerated but decrease transport efficiency. A free carboxyl group is preferred. This chain is Proton-coupled amino acid transporter 2, found in Mus musculus (Mouse).